Consider the following 1178-residue polypeptide: Dual specificity mitogen-activated protein kinase kinase hemipterous (1178 aa).

Disordered stretches follow at residues S74–S103 and A115–L148. Composition is skewed to low complexity over residues A91–S103 and A115–T128. The Protein kinase domain occupies L197 to I456. Residues L203 to V211 and K226 contribute to the ATP site. D320 acts as the Proton acceptor in catalysis. Residue S348 is modified to Phosphoserine. T352 carries the post-translational modification Phosphothreonine. Positions T522–F648 are disordered. A compositionally biased stretch (polar residues) spans Y523–Y543. The span at Q544–T570 shows a compositional bias: low complexity. Gly residues predominate over residues G574–S593. The span at G594–G608 shows a compositional bias: low complexity. Positions K636–S646 are enriched in basic and acidic residues. Residues S646 and S662 each carry the phosphoserine modification. 6 disordered regions span residues T715–G783, Q797–S851, G912–N933, T999–N1026, S1042–Q1108, and G1122–Q1178. Over residues T724–D734 the composition is skewed to polar residues. Composition is skewed to low complexity over residues S735–G783, R808–P817, and T837–S851. The span at G912–Y928 shows a compositional bias: polar residues. A compositionally biased stretch (low complexity) spans S1042–T1055. Phosphoserine occurs at positions 1150 and 1154. The span at P1168–Q1178 shows a compositional bias: basic and acidic residues.

The protein belongs to the protein kinase superfamily. STE Ser/Thr protein kinase family. MAP kinase kinase subfamily. In terms of processing, MAPKK is itself dependent on Ser/Thr phosphorylation for activity catalyzed by MAP kinase kinase kinases. Post-translationally, weakly autophosphorylated.

The enzyme catalyses L-seryl-[protein] + ATP = O-phospho-L-seryl-[protein] + ADP + H(+). The catalysed reaction is L-threonyl-[protein] + ATP = O-phospho-L-threonyl-[protein] + ADP + H(+). It carries out the reaction L-tyrosyl-[protein] + ATP = O-phospho-L-tyrosyl-[protein] + ADP + H(+). Required for the epithelial cell sheet movement called dorsal closure (DC), which allows establishment of the dorsal epidermis. Controls the expression in the dorsal epithelium edges of another dorsal closure gene, puckered (puc). Phosphorylates and activates the MAP kinase bsk; bsk signal transduction pathway mediates an immune response and morphogenesis. The sequence is that of Dual specificity mitogen-activated protein kinase kinase hemipterous (hep) from Drosophila melanogaster (Fruit fly).